The primary structure comprises 518 residues: MKKLKINYLFIGILALLLAVALWPSIPWFGKADNRIAAIQARGELRVSTIHTPLTYNEINGKPFGLDYELAKQFADYLGVKLKVTVRQNISQLFDDLDNGNADLLAAGLVYNSERVKNYQPGPTYYSVSQQLVYKVGQYRPRTLGNLTAEQLTVAPGHVVVNDLQTLKETKFPELSWKVDDKKGSAELMEDVIEGKLDYTIADSVAISLFQRVHPELAVALDITDEQPVTWFRPLDGDNTLSAALLDFFNEMNEDGTLARIEEKYLGHGDDFDYVDTRTFLRAVDTVLPQLKPLFEKYAEEIDWRLLAAIAYQESHWDAQATSPTGVRGMMMLTKNTAQSLGITDRTDAEQSIRGGVRYLQDMMSKVPESVPENERIWFALAAYNMGYAHMLDARALTAKTKGNPDSWADVKQRLPLLSQKPYYSKLTYGYARGHEAYAYVENIRKYQISLVGYLQEKEKQATEATMQLAQDYPAVSPTELGKEKFPFLSFLSQSSSNYLTHSPSLLFSRKGSEEKQN.

An N-terminal signal peptide occupies residues 1 to 21 (MKKLKINYLFIGILALLLAVA). The non-LT domain stretch occupies residues 22 to 269 (LWPSIPWFGK…RIEEKYLGHG (248 aa)). The tract at residues 270 to 518 (DDFDYVDTRT…SRKGSEEKQN (249 aa)) is LT domain. Glutamate 314 is a catalytic residue.

It in the N-terminal section; belongs to the bacterial solute-binding protein 3 family. In the C-terminal section; belongs to the transglycosylase Slt family.

The protein resides in the cell outer membrane. It carries out the reaction Exolytic cleavage of the (1-&gt;4)-beta-glycosidic linkage between N-acetylmuramic acid (MurNAc) and N-acetylglucosamine (GlcNAc) residues in peptidoglycan, from either the reducing or the non-reducing ends of the peptidoglycan chains, with concomitant formation of a 1,6-anhydrobond in the MurNAc residue.. Functionally, murein-degrading enzyme that degrades murein glycan strands and insoluble, high-molecular weight murein sacculi, with the concomitant formation of a 1,6-anhydromuramoyl product. Lytic transglycosylases (LTs) play an integral role in the metabolism of the peptidoglycan (PG) sacculus. Their lytic action creates space within the PG sacculus to allow for its expansion as well as for the insertion of various structures such as secretion systems and flagella. The polypeptide is Membrane-bound lytic murein transglycosylase F (Shigella dysenteriae serotype 1 (strain Sd197)).